The following is a 145-amino-acid chain: Putative pre-16S rRNA nuclease (145 aa).

Belongs to the YqgF nuclease family.

The protein resides in the cytoplasm. Functionally, could be a nuclease involved in processing of the 5'-end of pre-16S rRNA. The protein is Putative pre-16S rRNA nuclease of Pseudomonas fluorescens (strain SBW25).